The sequence spans 500 residues: Metal transporter Nramp3.1 (500 aa).

The next 12 helical transmembrane spans lie at 51–71 (LWLFTGPGFLMCIAFLDPGNL), 79–99 (AIAGYSLLWLLLWATAMGLLV), 128–148 (MILWIMAELALIGADIQEVIG), 160–180 (VLPLWAGVIITASDCFIFLFL), 188–208 (LEAAFGILIGIMAVTFAWMFA), 234–254 (AVGVVGCIIMPHNVFLHSALV), 280–300 (AALAISFMINLFVTTIFAKGF), 322–342 (YGGGFFPILYIWGIGLLAAGQ), 370–390 (ALITRSCAIIPTIIVALVFDT), 401–421 (WLNMLQSIQIPFALIPLLCLV), 439–459 (VSWLVAALVMLINGYLLLDFF), and 467–487 (VFTTVVCAFTGAYVTFIIYLI).

It belongs to the NRAMP (TC 2.A.55) family. In terms of tissue distribution, expressed in roots, stems, buds and leaves.

The protein resides in the golgi apparatus. It localises to the trans-Golgi network membrane. It catalyses the reaction Mn(2+)(in) = Mn(2+)(out). It carries out the reaction Fe(2+)(in) = Fe(2+)(out). Its function is as follows. Divalent metal transporter. Can transport manganese (Mn) and iron (Fe). Involved in the control of cell-to-cell transport of manganese (Mn) between organs and tissues to monitor Mn homeostasis. This Populus trichocarpa (Western balsam poplar) protein is Metal transporter Nramp3.1.